Reading from the N-terminus, the 203-residue chain is Peptidyl-tRNA hydrolase (203 aa).

Tyr14 is a binding site for tRNA. His19 functions as the Proton acceptor in the catalytic mechanism. TRNA-binding residues include Tyr64, Asn66, and Asn112.

The protein belongs to the PTH family. Monomer.

The protein resides in the cytoplasm. It catalyses the reaction an N-acyl-L-alpha-aminoacyl-tRNA + H2O = an N-acyl-L-amino acid + a tRNA + H(+). Functionally, hydrolyzes ribosome-free peptidyl-tRNAs (with 1 or more amino acids incorporated), which drop off the ribosome during protein synthesis, or as a result of ribosome stalling. Catalyzes the release of premature peptidyl moieties from peptidyl-tRNA molecules trapped in stalled 50S ribosomal subunits, and thus maintains levels of free tRNAs and 50S ribosomes. This chain is Peptidyl-tRNA hydrolase, found in Methylobacterium sp. (strain 4-46).